The chain runs to 284 residues: Elongation factor Ts (284 aa).

Positions 80-83 (TDFV) are involved in Mg(2+) ion dislocation from EF-Tu.

Belongs to the EF-Ts family.

Its subcellular location is the cytoplasm. Its function is as follows. Associates with the EF-Tu.GDP complex and induces the exchange of GDP to GTP. It remains bound to the aminoacyl-tRNA.EF-Tu.GTP complex up to the GTP hydrolysis stage on the ribosome. In Photobacterium profundum (strain SS9), this protein is Elongation factor Ts.